The sequence spans 288 residues: UDP-3-O-acyl-N-acetylglucosamine deacetylase (288 aa).

Zn(2+)-binding residues include H79, H236, and D240. H263 serves as the catalytic Proton donor.

It belongs to the LpxC family. Requires Zn(2+) as cofactor.

The enzyme catalyses a UDP-3-O-[(3R)-3-hydroxyacyl]-N-acetyl-alpha-D-glucosamine + H2O = a UDP-3-O-[(3R)-3-hydroxyacyl]-alpha-D-glucosamine + acetate. It participates in glycolipid biosynthesis; lipid IV(A) biosynthesis; lipid IV(A) from (3R)-3-hydroxytetradecanoyl-[acyl-carrier-protein] and UDP-N-acetyl-alpha-D-glucosamine: step 2/6. Catalyzes the hydrolysis of UDP-3-O-myristoyl-N-acetylglucosamine to form UDP-3-O-myristoylglucosamine and acetate, the committed step in lipid A biosynthesis. This is UDP-3-O-acyl-N-acetylglucosamine deacetylase from Rickettsia conorii (strain ATCC VR-613 / Malish 7).